Reading from the N-terminus, the 445-residue chain is tRNA modification GTPase MnmE (445 aa).

Arginine 21, glutamate 78, and lysine 117 together coordinate (6S)-5-formyl-5,6,7,8-tetrahydrofolate. The TrmE-type G domain maps to 213 to 370 (GFRIALVGAP…LKETLSERVV (158 aa)). Residues 223–228 (NAGKST), 242–248 (TATPGTT), and 267–270 (DTAG) each bind GTP. Positions 227 and 248 each coordinate Mg(2+). Lysine 445 contributes to the (6S)-5-formyl-5,6,7,8-tetrahydrofolate binding site.

The protein belongs to the TRAFAC class TrmE-Era-EngA-EngB-Septin-like GTPase superfamily. TrmE GTPase family. As to quaternary structure, homodimer. Heterotetramer of two MnmE and two MnmG subunits. K(+) is required as a cofactor.

It is found in the cytoplasm. Its function is as follows. Exhibits a very high intrinsic GTPase hydrolysis rate. Involved in the addition of a carboxymethylaminomethyl (cmnm) group at the wobble position (U34) of certain tRNAs, forming tRNA-cmnm(5)s(2)U34. In Phenylobacterium zucineum (strain HLK1), this protein is tRNA modification GTPase MnmE.